The sequence spans 310 residues: Cytosolic Fe-S cluster assembly factor Nubp1 homolog (310 aa).

Residues C9, C23, C26, and C32 each contribute to the [4Fe-4S] cluster site. 63 to 70 serves as a coordination point for ATP; the sequence is GKGGVGKS. 2 residues coordinate [4Fe-4S] cluster: C240 and C243.

This sequence belongs to the Mrp/NBP35 ATP-binding proteins family. NUBP1/NBP35 subfamily. As to quaternary structure, heterotetramer of 2 Nubp1 and 2 Nubp2 chains. [4Fe-4S] cluster is required as a cofactor.

It localises to the cytoplasm. Component of the cytosolic iron-sulfur (Fe/S) protein assembly (CIA) machinery. Required for maturation of extramitochondrial Fe-S proteins. The Nubp1-Nubp2 heterotetramer forms a Fe-S scaffold complex, mediating the de novo assembly of an Fe-S cluster and its transfer to target apoproteins. The polypeptide is Cytosolic Fe-S cluster assembly factor Nubp1 homolog (Drosophila mojavensis (Fruit fly)).